A 444-amino-acid polypeptide reads, in one-letter code: MKTVQLDQLKQQFPLIQTLQDYQETFWFNPHRYPLNEALAKVGLTEQDVKEAEARLARFAPYLAKVFPETQAQHGKIESALVKIADMQQALSLQKHKTLIGKLWLKKDSHLPISGSIKARGGIYEVLAHAEKLAIEAGLLKLEDDYSKLDQDSFRTFFSKYQIAVGSTGNLGLSIGIMSAKLGFRVSVHMSADARQWKKDKLRSLGVNVVEYASDYGVAVEEGRKAAEQDPFCFFIDDENSTTLFLGYAVAGLRLKQQFEQKQIKVDADHPLFVYLPCGVGGGPGGVSFGLKLAFGEHVHCIFAEPTHSPCMLLGVYTGLHDQISVNDIGLDNITAADGLAVGRASGFVGRAMQQLIDGYYTIHDECLYELIALLNQTENIQVEPSAAAGMMGPYYVQTTPDYLALHQLSAEKLQHATHVVWATGGGMVPPDEMQKYLTHSQSN.

The residue at position 118 (Lys-118) is an N6-(pyridoxal phosphate)lysine.

Belongs to the serine/threonine dehydratase family. DsdA subfamily. Pyridoxal 5'-phosphate is required as a cofactor.

The enzyme catalyses D-serine = pyruvate + NH4(+). The polypeptide is Probable D-serine dehydratase (Acinetobacter baumannii (strain ATCC 17978 / DSM 105126 / CIP 53.77 / LMG 1025 / NCDC KC755 / 5377)).